The sequence spans 387 residues: Succinate--CoA ligase [ADP-forming] subunit beta (387 aa).

Positions 9–245 (KDLLESYGLK…KSQENAKELK (237 aa)) constitute an ATP-grasp domain. Residues Lys-46, 53-55 (GRG), Glu-100, Tyr-103, and Glu-108 each bind ATP. Asn-200 and Asp-214 together coordinate Mg(2+). Residues Asn-265 and 322-324 (GIV) each bind substrate.

This sequence belongs to the succinate/malate CoA ligase beta subunit family. As to quaternary structure, heterotetramer of two alpha and two beta subunits. Mg(2+) is required as a cofactor.

It catalyses the reaction succinate + ATP + CoA = succinyl-CoA + ADP + phosphate. It carries out the reaction GTP + succinate + CoA = succinyl-CoA + GDP + phosphate. It functions in the pathway carbohydrate metabolism; tricarboxylic acid cycle; succinate from succinyl-CoA (ligase route): step 1/1. Succinyl-CoA synthetase functions in the citric acid cycle (TCA), coupling the hydrolysis of succinyl-CoA to the synthesis of either ATP or GTP and thus represents the only step of substrate-level phosphorylation in the TCA. The beta subunit provides nucleotide specificity of the enzyme and binds the substrate succinate, while the binding sites for coenzyme A and phosphate are found in the alpha subunit. This is Succinate--CoA ligase [ADP-forming] subunit beta from Francisella tularensis subsp. holarctica (strain OSU18).